The following is a 177-amino-acid chain: GTP-dependent dephospho-CoA kinase (177 aa).

Residues Asp45, Val46, Val47, Asp64, and Glu120 each coordinate GTP.

The protein belongs to the GTP-dependent DPCK family.

It catalyses the reaction 3'-dephospho-CoA + GTP = GDP + CoA + H(+). It participates in cofactor biosynthesis; coenzyme A biosynthesis. In terms of biological role, catalyzes the GTP-dependent phosphorylation of the 3'-hydroxyl group of dephosphocoenzyme A to form coenzyme A (CoA). The polypeptide is GTP-dependent dephospho-CoA kinase (Halobacterium salinarum (strain ATCC 29341 / DSM 671 / R1)).